The sequence spans 221 residues: MAQGILGKKIGMTQMFNEQGEIIPITIVDVSANVVLQQKNVAIDGYNATQIGFDDKKDKITTKPMLGHFKKAKTTPKRFIKEIIFKKENISSLSALAVGDQVSCDLFQVGDLVDVTGTSKGKGFAGVIKRHNQSRGPETHGSRHHRRPGSMGPIKGKIKGKKLPGQMGHQTVTIQNLVLFSVDNQKNLFLIKGSVPGPNKGFVVIKSAVKKLSKEQANAKI.

Positions 131–165 (HNQSRGPETHGSRHHRRPGSMGPIKGKIKGKKLPG) are disordered.

This sequence belongs to the universal ribosomal protein uL3 family. As to quaternary structure, part of the 50S ribosomal subunit. Forms a cluster with proteins L14 and L19.

In terms of biological role, one of the primary rRNA binding proteins, it binds directly near the 3'-end of the 23S rRNA, where it nucleates assembly of the 50S subunit. The chain is Large ribosomal subunit protein uL3 from Phytoplasma australiense.